A 326-amino-acid polypeptide reads, in one-letter code: Ornithine carbamoyltransferase (326 aa).

Residues 54 to 57, Gln81, Arg105, and 132 to 135 contribute to the carbamoyl phosphate site; these read STRT and HPTQ. L-ornithine is bound by residues Asn164, Asp225, and 229-230; that span reads SM. Residues 266–267 and Arg311 contribute to the carbamoyl phosphate site; that span reads CL.

This sequence belongs to the aspartate/ornithine carbamoyltransferase superfamily. OTCase family.

It is found in the cytoplasm. The enzyme catalyses carbamoyl phosphate + L-ornithine = L-citrulline + phosphate + H(+). It participates in amino-acid biosynthesis; L-arginine biosynthesis; L-arginine from L-ornithine and carbamoyl phosphate: step 1/3. Its function is as follows. Reversibly catalyzes the transfer of the carbamoyl group from carbamoyl phosphate (CP) to the N(epsilon) atom of ornithine (ORN) to produce L-citrulline. This chain is Ornithine carbamoyltransferase (argF), found in Streptococcus mutans serotype c (strain ATCC 700610 / UA159).